A 142-amino-acid chain; its full sequence is MAKKVEAYIKLQVAAGMANPSPPVGPALGQHGVNIMEFCKAFNARTESVEKGLPTPVVISVYSDRSFTFITKTPPAAVLLKKAAGVKSGSGRPNSDKVGTVTDSQIQEIAETKAADMTGADIEAMKRSIAGTARSMGLVVEG.

Residues 84 to 103 (AGVKSGSGRPNSDKVGTVTD) form a disordered region.

It belongs to the universal ribosomal protein uL11 family. In terms of assembly, part of the ribosomal stalk of the 50S ribosomal subunit. Interacts with L10 and the large rRNA to form the base of the stalk. L10 forms an elongated spine to which L12 dimers bind in a sequential fashion forming a multimeric L10(L12)X complex. Post-translationally, one or more lysine residues are methylated.

Functionally, forms part of the ribosomal stalk which helps the ribosome interact with GTP-bound translation factors. This is Large ribosomal subunit protein uL11 from Aliivibrio salmonicida (strain LFI1238) (Vibrio salmonicida (strain LFI1238)).